The primary structure comprises 113 residues: Large ribosomal subunit protein bL19 (113 aa).

It belongs to the bacterial ribosomal protein bL19 family.

This protein is located at the 30S-50S ribosomal subunit interface and may play a role in the structure and function of the aminoacyl-tRNA binding site. The protein is Large ribosomal subunit protein bL19 of Moorella thermoacetica (strain ATCC 39073 / JCM 9320).